Here is a 502-residue protein sequence, read N- to C-terminus: Ubiquitin-associated protein 1 (502 aa).

Positions 1 to 95 (MASKKLGTDV…AEAKVNSKSG (95 aa)) are interaction with ESCRT-I. The 47-residue stretch at 17 to 63 (LDDVPFKIGDKFKTPAKVGLPIGFSLPDCLQVVREMQYDFSLEKKTI) folds into the UMA domain. Over residues 80-100 (ERKAEEAEAKVNSKSGPEGDS) the composition is skewed to basic and acidic residues. Disordered stretches follow at residues 80 to 117 (ERKA…PPPI) and 135 to 156 (VSSS…DFNP). 3 positions are modified to phosphoserine: Ser-146, Ser-205, and Ser-289. Positions 260 to 290 (VSNIKSLSFPKLDSDDSNQKTVKLASTFHST) are interaction with PTPN23. 2 consecutive UBA domains span residues 389–430 (SPSE…LFAH) and 451–498 (QCSE…LMAR).

As to quaternary structure, component of an ESCRT-I complex (endosomal sorting complex required for transport I) which consists of TSG101, VPS28, VPS37A and UBAP1 in a 1:1:1:1 stoichiometry. Interacts with PTPN23. Interacts (via UBA domains) with ubiquitinated proteins. Ubiquitous. Highly expressed in heart, liver, brain, kidney, spleen, skeletal muscle, stomach, testis and lung.

The protein resides in the cytoplasm. It localises to the cytosol. Its subcellular location is the endosome. Its function is as follows. Component of the ESCRT-I complex, a regulator of vesicular trafficking process. Binds to ubiquitinated cargo proteins and is required for the sorting of endocytic ubiquitinated cargos into multivesicular bodies (MVBs). Plays a role in the proteasomal degradation of ubiquitinated cell-surface proteins, such as EGFR and BST2. In Mus musculus (Mouse), this protein is Ubiquitin-associated protein 1.